Consider the following 22-residue polypeptide: uncharacterized protein (22 aa).

The interval 1–22 (MHNSIAYDKDGNSTGQKYYAYG) is disordered.

This is an uncharacterized protein from Lactobacillus helveticus (Lactobacillus suntoryeus).